We begin with the raw amino-acid sequence, 698 residues long: Dolichyl-diphosphooligosaccharide--protein glycosyltransferase subunit 2 (698 aa).

An N-terminal signal peptide occupies residues 1-29; the sequence is MAAAGGLPASATLLLLVIAAVAVAPLASA. At 30–600 the chain is on the lumenal side; the sequence is VRPVSDAHRS…RSPEKRPPKE (571 aa). The chain crosses the membrane as a helical span at residues 601–621; sequence LSFAFTGLTLLPIVGFLIGLM. Residues 622 to 638 are Cytoplasmic-facing; the sequence is RLGVNLKNFPSLPAPAA. Residues 639–659 traverse the membrane as a helical segment; that stretch reads FASLFHAGIGAVLLLYVLFWI. A topological domain (lumenal) is located at residue K660. The chain crosses the membrane as a helical span at residues 661–681; it reads LDLFTTLKYLSFLGVFLVFVG. Residues 682–698 lie on the Cytoplasmic side of the membrane; the sequence is HRALSYLSSTSAKQKTA.

It belongs to the SWP1 family. In terms of assembly, component of the oligosaccharyltransferase (OST) complex.

It localises to the endoplasmic reticulum membrane. The protein operates within protein modification; protein glycosylation. In terms of biological role, subunit of the oligosaccharyl transferase (OST) complex that catalyzes the initial transfer of a defined glycan (Glc(3)Man(9)GlcNAc(2) in eukaryotes) from the lipid carrier dolichol-pyrophosphate to an asparagine residue within an Asn-X-Ser/Thr consensus motif in nascent polypeptide chains, the first step in protein N-glycosylation. N-glycosylation occurs cotranslationally and the complex associates with the Sec61 complex at the channel-forming translocon complex that mediates protein translocation across the endoplasmic reticulum (ER). All subunits are required for a maximal enzyme activity. This Oryza sativa subsp. japonica (Rice) protein is Dolichyl-diphosphooligosaccharide--protein glycosyltransferase subunit 2 (RPN2).